The chain runs to 725 residues: MADEDLIFRLEGVDGGQSPRAGHDGDSDGDSDDEEGYFICPITDDPSSNQNVNSKVNKYYSNLTKSERYSSSGSPANSFHFKEAWKHAIQKAKHMPDPWAEFHLEDIATERATRHRYNAVTGEWLDDEVLIKMASQPFGRGAMRECFRTKKLSNFLHAQQWKGASNYVAKRYIEPVDRDVYFEDVRLQMEAKLWGEEYNRHKPPKQVDIMQMCIIELKDRPGKPLFHLEHYIEGKYIKYNSNSGFVRDDNIRLTPQAFSHFTFERSGHQLIVVDIQGVGDLYTDPQIHTETGTDFGDGNLGVRGMALFFYSHACNRICESMGLAPFDLSPRERDAVNQNTKLLQSAKTILRGTEEKCGSPQVRTLSGSRPPLLRPLSENSGDENMSDVTFDSLPSSPSSATPHSQKLDHLHWPVFSDLDNMASRDHDHLDNHRESENSGDSGYPSEKRGELDDPEPREHGHSYSNRKYESDEDSLGSSGRVCVEKWNLLNSSRLHLPRASAVALEVQRLNALDLEKKIGKSILGKVHLAMVRYHEGGRFCEKGEEWDQESAVFHLEHAANLGELEAIVGLGLMYSQLPHHILADVSLKETEENKTKGFDYLLKAAEAGDRQSMILVARAFDSGQNLSPDRCQDWLEALHWYNTALEMTDCDEGGEYDGMQDEPRYMMLAREAEMLFTGGYGLEKDPQRSGDLYTQAAEAAMEAMKGRLANQYYQKAEEAWAQMEE.

A compositionally biased stretch (basic and acidic residues) spans 1–12 (MADEDLIFRLEG). The tract at residues 1–38 (MADEDLIFRLEGVDGGQSPRAGHDGDSDGDSDDEEGYF) is disordered. Position 2 is an N-acetylalanine (Ala-2). Ser-18 and Ser-27 each carry phosphoserine. Over residues 27–36 (SDGDSDDEEG) the composition is skewed to acidic residues. Phosphoserine; by autocatalysis is present on residues Ser-61 and Ser-66. Residues Ser-70, Ser-71, Ser-72, and Ser-74 each carry the phosphoserine modification. Phosphoserine; by autocatalysis and TRPM7 is present on Ser-78. Positions 81–94 (FKEAWKHAIQKAKH) are calmodulin-binding. One can recognise an Alpha-type protein kinase domain in the interval 116–326 (RYNAVTGEWL…ICESMGLAPF (211 aa)). Residue Ser-243 is modified to Phosphoserine. 296–302 (GDGNLGV) provides a ligand contact to ATP. Phosphothreonine; by autocatalysis is present on residues Thr-348 and Thr-353. Disordered regions lie at residues 352-405 (GTEE…PHSQ) and 423-477 (SRDH…SLGS). Ser-359 carries the phosphoserine; by MAPK13 and CDK1 modification. Residues 363–377 (RTLSGSRPPLLRPLS) show a composition bias toward low complexity. Ser-366 bears the Phosphoserine; by autocatalysis, RPS6KA1 and RPS6KB1 mark. Positions 386–404 (SDVTFDSLPSSPSSATPHS) are enriched in polar residues. Ser-392 is modified (phosphoserine). At Ser-398 the chain carries Phosphoserine; by AMPK. Composition is skewed to basic and acidic residues over residues 423–436 (SRDH…RESE) and 445–469 (SEKR…RKYE). Ser-435 carries the phosphoserine modification. Ser-445 carries the phosphoserine; by autocatalysis modification. Ser-470 is subject to Phosphoserine. Ser-474 bears the Phosphoserine; by autocatalysis mark. Ser-477 bears the Phosphoserine mark. Phosphoserine; by autocatalysis is present on Ser-491. Ser-500 is modified (phosphoserine; by PKA).

This sequence belongs to the protein kinase superfamily. Alpha-type protein kinase family. In terms of assembly, monomer or homodimer. Interacts with Calmodulin/CALM1; this interaction is strictly required for phosphorylation activity. Post-translationally, autophosphorylated at multiple residues, Thr-348 being the major site. Phosphorylated by AMP-activated protein kinase AMPK at Ser-398 leading to EEF2K activation and protein synthesis inhibition. Phosphorylated by TRPM7 at Ser-78 resulting in improved protein stability, higher EE2F phosphorylated and subsequently reduced rate of protein synthesis. Phosphorylation by other kinases such as CDK1 and MAPK13 at Ser-359 or RPS6KA1 and RPS6KB1 at Ser-366 instead decrease EEF2K activity and promote protein synthesis.

The enzyme catalyses [translation elongation factor 2] + ATP = [translation elongation factor 2]-phosphate + ADP + H(+). Its activity is regulated as follows. Undergoes calcium/calmodulin-dependent intramolecular autophosphorylation, and this results in it becoming partially calcium/calmodulin-independent. In terms of biological role, threonine kinase that regulates protein synthesis by controlling the rate of peptide chain elongation. Upon activation by a variety of upstream kinases including AMPK or TRPM7, phosphorylates the elongation factor EEF2 at a single site, renders it unable to bind ribosomes and thus inactive. In turn, the rate of protein synthesis is reduced. In Homo sapiens (Human), this protein is Eukaryotic elongation factor 2 kinase (EEF2K).